The primary structure comprises 622 residues: Neuronal acetylcholine receptor subunit alpha-4 (622 aa).

An N-terminal signal peptide occupies residues 1-23 (MGFLVSKGNLLLLLCASIFPAFG). At 24 to 237 (HVETRAHAEE…ITYSFIIRRL (214 aa)) the chain is on the extracellular side. N52 carries N-linked (GlcNAc...) asparagine glycosylation. Positions 71 and 73 each coordinate Ca(2+). N102 carries an N-linked (GlcNAc...) asparagine glycan. Cystine bridges form between C156–C170 and C220–C221. The helical transmembrane segment at 238 to 262 (PLFYTINLIIPCLLISCLTVLVFYL) threads the bilayer. A lipid anchor (S-palmitoyl cysteine) is attached at C266. 2 consecutive transmembrane segments (helical) span residues 270 to 288 (ITLCISVLLSLTVFLLLIT) and 304 to 325 (YLLFTMIFVTLSIIITVFVLNV). The Cytoplasmic segment spans residues 326–595 (HHRSPRTHTM…WKYVAMVIDR (270 aa)). Disordered stretches follow at residues 380–477 (WSET…TEEG) and 497–516 (QTNGHSSASPASQRCHLNEE). Residues 390-407 (TTSSSPSPQSNEPSPTSS) are compositionally biased toward low complexity. 2 stretches are compositionally biased toward polar residues: residues 450–472 (SDTQTTSISKGRSLSVQQMYSPN) and 497–508 (QTNGHSSASPAS). The helical transmembrane segment at 596 to 614 (IFLWMFIIVCLLGTVGLFL) threads the bilayer.

Belongs to the ligand-gated ion channel (TC 1.A.9) family. Acetylcholine receptor (TC 1.A.9.1) subfamily. Alpha-4/CHRNA4 sub-subfamily. Neuronal AChR is composed of two different types of subunits: alpha and beta. CHRNA4 forms heteropentameric neuronal acetylcholine receptors with CHRNB2 and CHRNB4, as well as CHRNA5 and CHRNB3 as accesory subunits. Found in two major stoichiometric forms, LS (low agonist sensitivity): (CHRNA4)3:(CHRNB2)2 and HS (high agonist sensitivity): (CHRNA4)2:(CHRNB2)3, the two stoichiometric forms differ in their unitary conductance, calcium permeability, ACh sensitivity and potentiation by divalent cation. Cells produce predominantly an (CHRNA4)3:(CHRNB2)2 nAChR. The (CHRNA4)2:(CHRNB2)3 expression is selectively up-regulated by nicotine and has lower single channel conductance and calcium permeability. In the striatum, also forms CHRNA4:CHRNA6:CHRNB2 complexes. Also found in the stoichiometric form: (CHRNA4:CHRNB2)2:CHRNB3.

The protein localises to the synaptic cell membrane. It localises to the cell membrane. It carries out the reaction Ca(2+)(in) = Ca(2+)(out). It catalyses the reaction K(+)(in) = K(+)(out). The catalysed reaction is Na(+)(in) = Na(+)(out). Its activity is regulated as follows. Activated by a myriad of ligands such as acetylcholine, cytisine, nicotine, choline and epibatidine. Channel potentiation by calcium is stoichiometry-selective, CHRNA4:CHRNB2 nACh receptor is achieved by calcium association with topographically distinct sites framed by anionic residues within the CHRNA4 subunit and between the CHRNA4 and CHRNB2 subunits. nAChR activity is inhibited by the antagonist alpha-conotoxins BuIA, PnIA, GID and MII, small disulfide-constrained peptides from cone snails. Functionally, component of neuronal acetylcholine receptors (nAChRs) that function as pentameric, ligand-gated cation channels with high calcium permeability among other activities. nAChRs are excitatory neurotrasnmitter receptors formed by a collection of nAChR subunits known to mediate synaptic transmission in the nervous system and the neuromuscular junction. Each nAchR subunit confers differential attributes to channel properties, including activation, deactivation and desensitization kinetics, pH sensitivity, cation permeability, and binding to allosteric modulators. CHRNA4 forms heteropentameric neuronal acetylcholine receptors with CHRNB2 and CHRNB4, as well as CHRNA5 and CHRNB3 as accesory subunits. Is the most abundant nAChR subtype expressed in the central nervous system. Found in two major stoichiometric forms,(CHRNA4)3:(CHRNB2)2 and (CHRNA4)2:(CHRNB2)3, the two stoichiometric forms differ in their unitary conductance, calcium permeability, ACh sensitivity and potentiation by divalent cation. Involved in the modulation of calcium-dependent signaling pathways, influences the release of neurotransmitters, including dopamine, glutamate and GABA. The chain is Neuronal acetylcholine receptor subunit alpha-4 (CHRNA4) from Gallus gallus (Chicken).